The chain runs to 302 residues: Bifunctional ligase/repressor BirA (302 aa).

The segment at residues 14-33 (QPKVRSELEKFSKNLEEDIQ) is a DNA-binding region (H-T-H motif). The 175-residue stretch at 62 to 236 (QISTALFPYS…HLYTRLNIFE (175 aa)) folds into the BPL/LPL catalytic domain. Biotin-binding positions include 80 to 82 (STN), Gln-103, 107 to 109 (RGR), and Lys-167.

This sequence belongs to the biotin--protein ligase family.

The enzyme catalyses biotin + L-lysyl-[protein] + ATP = N(6)-biotinyl-L-lysyl-[protein] + AMP + diphosphate + H(+). Functionally, acts both as a biotin--[acetyl-CoA-carboxylase] ligase and a biotin-operon repressor. In the presence of ATP, BirA activates biotin to form the BirA-biotinyl-5'-adenylate (BirA-bio-5'-AMP or holoBirA) complex. HoloBirA can either transfer the biotinyl moiety to the biotin carboxyl carrier protein (BCCP) subunit of acetyl-CoA carboxylase, or bind to the biotin operator site and inhibit transcription of the operon. The protein is Bifunctional ligase/repressor BirA of Haemophilus influenzae (strain ATCC 51907 / DSM 11121 / KW20 / Rd).